Reading from the N-terminus, the 172-residue chain is MKESSRKQGAASPCAACKLLRRRCAQDCVFSPYFPADEPQKFANVHRVFGASNVNKMLQELPIHQRGDAVSSMVYEANARVRDPVYGCVGAISSLQQQIDVLQAQLALAQAEVVHLRVRQSTNFPGHGLCPDSPSSSGSPSSKQVSPQDNKGMFSHMDIVDEASLGESMWSC.

The 102-residue stretch at 12–113 (SPCAACKLLR…AQLALAQAEV (102 aa)) folds into the LOB domain. Residues 125-152 (PGHGLCPDSPSSSGSPSSKQVSPQDNKG) form a disordered region. Positions 131-147 (PDSPSSSGSPSSKQVSP) are enriched in low complexity.

Belongs to the LOB domain-containing protein family. Expressed in young shoots, roots, stems, leaves and flowers.

This chain is LOB domain-containing protein 4 (LBD4), found in Arabidopsis thaliana (Mouse-ear cress).